The primary structure comprises 680 residues: uncharacterized protein (680 aa).

Belongs to the HyuA family.

This is an uncharacterized protein from Methanocaldococcus jannaschii (strain ATCC 43067 / DSM 2661 / JAL-1 / JCM 10045 / NBRC 100440) (Methanococcus jannaschii).